A 37-amino-acid chain; its full sequence is Large ribosomal subunit protein bL36c (37 aa).

This sequence belongs to the bacterial ribosomal protein bL36 family.

The protein localises to the plastid. The protein resides in the chloroplast. This Gracilaria tenuistipitata var. liui (Red alga) protein is Large ribosomal subunit protein bL36c.